The following is a 153-amino-acid chain: UPAR/Ly6 domain-containing protein cold (153 aa).

An N-terminal signal peptide occupies residues 1 to 25 (MKSWEIAVVLVAAVYLCSQVNFVAG). The Extracellular segment spans residues 26–130 (LECYVCSNQT…FVISGAPSRQ (105 aa)). Cystine bridges form between C28-C55, C31-C41, C48-C81, C87-C112, C99-C109, and C113-C118. An N-linked (GlcNAc...) asparagine glycan is attached at N33. S124 is lipidated: GPI-anchor amidated serine. Positions 125 to 153 (GAPSRQGYGVCLTLLTALLGLGSWLIPRS) are cleaved as a propeptide — removed in mature form. Residues 131 to 151 (GYGVCLTLLTALLGLGSWLIP) traverse the membrane as a helical segment. Residues 152-153 (RS) lie on the Cytoplasmic side of the membrane.

It belongs to the snake toxin-like superfamily. GPI-anchored. As to expression, expressed in all tissues that form septate junctions, including hindgut, trachea, epidermis and dorsal pouch. Expressed in subperineurial glial cells that form the hemolymph-brain barrier of the central nervous system.

It localises to the endosome membrane. The protein localises to the endoplasmic reticulum membrane. The protein resides in the cell membrane. Its subcellular location is the cell junction. It is found in the septate junction. Its function is as follows. Required for septate junction assembly, possibly by organizing the preassembly and transport of septate junction proteins such as dlg1/disks large 1 and Nrx-IV/Neurexin-IV. Involved in paracellular barrier functions of trachea, hindgut and salivary gland mediated by epithelial cell septate junctions. Involved in paracellular barrier functions of the hemolymph-brain barrier (insect blood-brain barrier) mediated by glial cell septate junctions. Required for maintenance of septate junctions in imaginal disk epithelial cells. Involved in the epithelial cell wound-healing response. Directly or indirectly mediates cell-cell adhesion during septate junction formation. The chain is UPAR/Ly6 domain-containing protein cold from Drosophila melanogaster (Fruit fly).